Here is a 121-residue protein sequence, read N- to C-terminus: Large ribosomal subunit protein bL12 (121 aa).

The protein belongs to the bacterial ribosomal protein bL12 family. Homodimer. Part of the ribosomal stalk of the 50S ribosomal subunit. Forms a multimeric L10(L12)X complex, where L10 forms an elongated spine to which 2 to 4 L12 dimers bind in a sequential fashion. Binds GTP-bound translation factors.

Its function is as follows. Forms part of the ribosomal stalk which helps the ribosome interact with GTP-bound translation factors. Is thus essential for accurate translation. In Pelagibacter ubique (strain HTCC1062), this protein is Large ribosomal subunit protein bL12.